The primary structure comprises 484 residues: Glutamate--tRNA ligase (484 aa).

The short motif at P11 to N21 is the 'HIGH' region element. Positions K252–R256 match the 'KMSKS' region motif. K255 is a binding site for ATP.

It belongs to the class-I aminoacyl-tRNA synthetase family. Glutamate--tRNA ligase type 1 subfamily. Monomer.

The protein resides in the cytoplasm. The catalysed reaction is tRNA(Glu) + L-glutamate + ATP = L-glutamyl-tRNA(Glu) + AMP + diphosphate. Catalyzes the attachment of glutamate to tRNA(Glu) in a two-step reaction: glutamate is first activated by ATP to form Glu-AMP and then transferred to the acceptor end of tRNA(Glu). This is Glutamate--tRNA ligase from Staphylococcus aureus (strain COL).